A 553-amino-acid chain; its full sequence is Zinc finger matrin-type protein 1 (553 aa).

A disordered region spans residues 16–36 (TPSSPAATCSGPMAGGDTSSN). 4 Matrin-type zinc fingers span residues 61–91 (TFCK…KVRL), 125–155 (KFCG…KMRQ), 223–253 (KYCK…NQAR), and 275–305 (YVCP…KESM). 2 disordered regions span residues 341–402 (QFRQ…DQRV) and 428–553 (HISR…ILGF). The span at 350-362 (DSCDYEEEEEQEP) shows a compositional bias: acidic residues. Residues 431–453 (RSPTSQDSSDNSSGSSSDESSGS) are compositionally biased toward low complexity. Basic residues predominate over residues 456–476 (KDKRRKRKHHRESRLRGSGRI). Residues 477 to 513 (RRGDENSEKRKRKGEDADSGKEDNKHDRGKTSGGDKD) are compositionally biased toward basic and acidic residues.

Its subcellular location is the nucleus. The chain is Zinc finger matrin-type protein 1 (zmat1) from Xenopus tropicalis (Western clawed frog).